The chain runs to 626 residues: Leucine-rich repeat and fibronectin type-III domain-containing protein 3 (626 aa).

Positions 1-16 (MAVLPLLLCLLPLAPA) are cleaved as a signal peptide. The Extracellular segment spans residues 17–539 (SSPPQPATSS…PHAPFLGGTM (523 aa)). Residues 19-59 (PPQPATSSPCPRRCRCQTQSLPLSVLCPGAGLLFVPPSLDR) enclose the LRRNT domain. 6 LRR repeats span residues 84–105 (GLLH…AFAD), 108–129 (ALRA…QLRG), 132–153 (NLRH…ALDD), 157–178 (TLED…ALGR), 181–202 (NVNT…AFSR), and 205–226 (KLAR…PLFS). The LRRCT domain occupies 249-295 (NPLHCNCELVWLRRLAREDDLEACASPPALGGRYFWAVGEEEFVCEP). Residues 295 to 382 (PPVVTHRSPP…GEATAAVELT (88 aa)) enclose the Ig-like domain. In terms of domain architecture, Fibronectin type-III 1 spans 308-395 (PAGRPAALRC…PPPPQLANST (88 aa)). The cysteines at positions 317 and 366 are disulfide-linked. Residues N339, N348, and N393 are each glycosylated (N-linked (GlcNAc...) asparagine). The tract at residues 382-423 (TVGPPPPPQLANSTSCDPPRDGEPDALTPPSAASASAKVADT) is disordered. Residues 406-423 (DALTPPSAASASAKVADT) are compositionally biased toward low complexity. In terms of domain architecture, Fibronectin type-III 2 spans 425-523 (APTDRGVQVT…GCARFSTEPA (99 aa)). The helical transmembrane segment at 540–560 (IIALGGVIVASVLVFIFVLLL) threads the bilayer. Residues 561-626 (RYKVHGVQPP…WGPSHEPAGP (66 aa)) lie on the Cytoplasmic side of the membrane.

The protein belongs to the LRFN family. In terms of assembly, can form heteromeric complexes with LRFN1, LRFN2, LRFN4 and LRFN5. Able to form homomeric complexes across cell junctions, between adjacent cells. Does not interact with DLG4. Post-translationally, N-glycosylated. As to expression, expressed in brain. Within brain, expressed in hippocampus, cerebellum, olfactory bulb and forebrain (at protein level).

It is found in the cell membrane. Its subcellular location is the cell projection. The protein localises to the axon. It localises to the dendrite. The protein resides in the synapse. It is found in the presynaptic cell membrane. Its subcellular location is the postsynaptic cell membrane. Its function is as follows. Cell adhesion molecule that mediates homophilic cell-cell adhesion in a Ca(2+)-independent manner. Promotes neurite outgrowth in hippocampal neurons. The protein is Leucine-rich repeat and fibronectin type-III domain-containing protein 3 of Rattus norvegicus (Rat).